Consider the following 689-residue polypeptide: Methionine--tRNA ligase (689 aa).

The 'HIGH' region signature appears at 15–25 (PYANGPIHLGH). Zn(2+)-binding residues include C146, C149, C159, and C162. The short motif at 332–336 (KMSKS) is the 'KMSKS' region element. K335 contributes to the ATP binding site. Residues 546–577 (KDNLQPTEAPKADKKADKKVEKKATTGDPLTD) are disordered. Basic and acidic residues predominate over residues 555–570 (PKADKKADKKVEKKAT). A tRNA-binding domain is found at 588–689 (DFAKLDLRIA…QGAKPGMRVK (102 aa)).

It belongs to the class-I aminoacyl-tRNA synthetase family. MetG type 1 subfamily. Homodimer. Zn(2+) is required as a cofactor.

The protein localises to the cytoplasm. It carries out the reaction tRNA(Met) + L-methionine + ATP = L-methionyl-tRNA(Met) + AMP + diphosphate. Its function is as follows. Is required not only for elongation of protein synthesis but also for the initiation of all mRNA translation through initiator tRNA(fMet) aminoacylation. This Shewanella denitrificans (strain OS217 / ATCC BAA-1090 / DSM 15013) protein is Methionine--tRNA ligase.